The primary structure comprises 262 residues: Insulin-like growth factor-binding protein 1 (262 aa).

The signal sequence occupies residues 1–25; it reads MPEVPAVRAWPLLLSLALQLGAAAG. The 81-residue stretch at 28–108 folds into the IGFBP N-terminal domain; sequence QPLHCAPCSA…TRGQGACMPA (81 aa). Disulfide bonds link Cys-32–Cys-59, Cys-35–Cys-61, Cys-43–Cys-62, Cys-50–Cys-65, Cys-72–Cys-85, and Cys-79–Cys-105. Residues 101–133 are disordered; the sequence is GQGACMPAPSAEATETKDPAAPETTSPESTEMT. Low complexity predominate over residues 121 to 131; that stretch reads APETTSPESTE. Phosphoserine is present on residues Ser-126, Ser-129, and Ser-147. At Tyr-161 the chain carries Phosphotyrosine. Residues 176-254 enclose the Thyroglobulin type-1 domain; that stretch reads KEPCQRELYK…STAVRGDPKC (79 aa). 3 disulfide bridges follow: Cys-179/Cys-209, Cys-220/Cys-231, and Cys-233/Cys-254. Residue Ser-245 is modified to Phosphoserine. The Cell attachment site signature appears at 249–251; the sequence is RGD.

As to quaternary structure, binds equally well IGF1 and IGF2. Interacts with integrin ITGA5:ITGB1. Interacts with VHL; this interaction inhibits HIF1A degradation.

Its subcellular location is the secreted. Functionally, multifunctional protein that plays a critical role in regulating the availability of IGFs such as IGF1 and IGF2 to their receptors and thereby regulates IGF-mediated cellular processes including cell migration, proliferation, differentiation or apoptosis in a cell-type specific manner. Also plays a positive role in cell migration by interacting with integrin ITGA5:ITGB1 through its RGD motif. Mechanistically, binding to integrins leads to activation of focal adhesion kinase/PTK2 and stimulation of the mitogen-activated protein kinase (MAPK) pathway. Regulates cardiomyocyte apoptosis by suppressing HIF-1alpha/HIF1A degradation through ubiquitination. This is Insulin-like growth factor-binding protein 1 (IGFBP1) from Sus scrofa (Pig).